Consider the following 149-residue polypeptide: Macrodomain Ter protein (149 aa).

It belongs to the MatP family. As to quaternary structure, homodimer.

Its subcellular location is the cytoplasm. Functionally, required for spatial organization of the terminus region of the chromosome (Ter macrodomain) during the cell cycle. Prevents early segregation of duplicated Ter macrodomains during cell division. Binds specifically to matS, which is a 13 bp signature motif repeated within the Ter macrodomain. The sequence is that of Macrodomain Ter protein from Vibrio campbellii (strain ATCC BAA-1116).